Consider the following 386-residue polypeptide: Flap endonuclease 1 (386 aa).

Residues 1 to 104 are N-domain; the sequence is MGILGLSKLI…GELAKRAERR (104 aa). Asp34 contributes to the Mg(2+) binding site. The DNA site is built by Arg47 and Arg70. The Mg(2+) site is built by Asp86, Glu158, Glu160, Asp179, and Asp181. The segment at 122 to 253 is I-domain; that stretch reads EIEKFNRRLV…KRAIELINNY (132 aa). Residue Glu158 coordinates DNA. Gly231 and Asp233 together coordinate DNA. Asp233 lines the Mg(2+) pocket. Residues 336-344 form an interaction with PCNA region; sequence TQVRLDSFF. Residues 351 to 386 are disordered; sequence PNAVHAAKRKAEEAKKSANNKKAKTSGGAARGRRPK.

It belongs to the XPG/RAD2 endonuclease family. FEN1 subfamily. Interacts with PCNA. Three molecules of FEN1 bind to one PCNA trimer with each molecule binding to one PCNA monomer. PCNA stimulates the nuclease activity without altering cleavage specificity. Mg(2+) is required as a cofactor. Phosphorylated. Phosphorylation upon DNA damage induces relocalization to the nuclear plasma.

The protein resides in the nucleus. The protein localises to the nucleolus. Its subcellular location is the nucleoplasm. It is found in the mitochondrion. Its function is as follows. Structure-specific nuclease with 5'-flap endonuclease and 5'-3' exonuclease activities involved in DNA replication and repair. During DNA replication, cleaves the 5'-overhanging flap structure that is generated by displacement synthesis when DNA polymerase encounters the 5'-end of a downstream Okazaki fragment. It enters the flap from the 5'-end and then tracks to cleave the flap base, leaving a nick for ligation. Also involved in the long patch base excision repair (LP-BER) pathway, by cleaving within the apurinic/apyrimidinic (AP) site-terminated flap. Acts as a genome stabilization factor that prevents flaps from equilibrating into structures that lead to duplications and deletions. Also possesses 5'-3' exonuclease activity on nicked or gapped double-stranded DNA, and exhibits RNase H activity. Also involved in replication and repair of rDNA and in repairing mitochondrial DNA. The sequence is that of Flap endonuclease 1 from Drosophila persimilis (Fruit fly).